The chain runs to 538 residues: Growth factor receptor-bound protein 14 (538 aa).

Positions 1–73 are disordered; the sequence is MTTSLQDGQS…KAKDLEVQET (73 aa). Threonine 2 is modified (N-acetylthreonine). Residues 54-69 show a composition bias toward basic and acidic residues; that stretch reads ATRRGAMDRRKAKDLE. One can recognise a Ras-associating domain in the interval 104–190; the sequence is KKQVIKVYSE…NKLYLRKNYA (87 aa). In terms of domain architecture, PH spans 232–340; that stretch reads YPEIHGFLHA…WVTAIRLLKY (109 aa). A phosphoserine mark is found at serine 370 and serine 373. The SH2 domain occupies 437–533; that stretch reads WFHHRISRDE…VLPCKLKHYC (97 aa).

The protein belongs to the GRB7/10/14 family. In terms of assembly, interacts with the cytoplasmic domain of the autophosphorylated insulin receptor, through the SH2 domain. Interacts with GRB14 (via BPS domain); this interaction protects the tyrosines in the activation loop on INSR from dephosphorylation. Binds to the ankyrin repeat region of TNKS2 via its N-terminus. Interacts with activated NRAS. Interacts (via SH2 domain) with TEK/TIE2 (tyrosine phosphorylated). Phosphorylated on serine residues. Phosphorylated on tyrosine residues by TEK/TIE2.

The protein resides in the cytoplasm. It is found in the endosome membrane. Adapter protein which modulates coupling of cell surface receptor kinases with specific signaling pathways. Binds to, and suppresses signals from, the activated insulin receptor (INSR). Potent inhibitor of insulin-stimulated MAPK3 phosphorylation. Plays a critical role regulating PDPK1 membrane translocation in response to insulin stimulation and serves as an adapter protein to recruit PDPK1 to activated insulin receptor, thus promoting PKB/AKT1 phosphorylation and transduction of the insulin signal. This is Growth factor receptor-bound protein 14 (Grb14) from Rattus norvegicus (Rat).